The chain runs to 197 residues: Imidazoleglycerol-phosphate dehydratase (197 aa).

This sequence belongs to the imidazoleglycerol-phosphate dehydratase family.

The protein localises to the cytoplasm. It catalyses the reaction D-erythro-1-(imidazol-4-yl)glycerol 3-phosphate = 3-(imidazol-4-yl)-2-oxopropyl phosphate + H2O. The protein operates within amino-acid biosynthesis; L-histidine biosynthesis; L-histidine from 5-phospho-alpha-D-ribose 1-diphosphate: step 6/9. The polypeptide is Imidazoleglycerol-phosphate dehydratase (Novosphingobium aromaticivorans (strain ATCC 700278 / DSM 12444 / CCUG 56034 / CIP 105152 / NBRC 16084 / F199)).